The chain runs to 108 residues: L-rhamnose mutarotase (108 aa).

Residue tyrosine 19 participates in substrate binding. Histidine 23 serves as the catalytic Proton donor. Residues tyrosine 45 and 80-81 (WW) each bind substrate.

This sequence belongs to the rhamnose mutarotase family. In terms of assembly, homodimer.

It localises to the cytoplasm. It carries out the reaction alpha-L-rhamnose = beta-L-rhamnose. It functions in the pathway carbohydrate metabolism; L-rhamnose metabolism. Involved in the anomeric conversion of L-rhamnose. The sequence is that of L-rhamnose mutarotase from Ligilactobacillus salivarius (strain UCC118) (Lactobacillus salivarius).